We begin with the raw amino-acid sequence, 90 residues long: MEPLRLADAESLLSETSVIPLTPPAQTPEAYYTESDDETAADFLVRMGRQQTAIRRRRRQTRAAGFVAAFVLVALISGGLGALMCWLAYR.

Topologically, residues 1 to 63 (MEPLRLADAE…IRRRRRQTRA (63 aa)) are intravirion. The short motif at 12–13 (LL) is the Di-leucine internalization motif element. The interval 29-38 (EAYYTESDDE) is acidic. A helical; Signal-anchor for type II membrane protein transmembrane segment spans residues 64–84 (AGFVAAFVLVALISGGLGALM). Over 85–90 (CWLAYR) the chain is Virion surface.

The protein belongs to the alphaherpesvirinae envelope protein US9 family. Post-translationally, phosphorylated on serines within the acidic cluster. Phosphorylation determines whether endocytosed viral US9 traffics to the trans-Golgi network or recycles to the cell membrane.

It localises to the virion membrane. The protein localises to the host Golgi apparatus membrane. Its subcellular location is the host smooth endoplasmic reticulum membrane. The protein resides in the host cell membrane. Its function is as follows. Essential for the anterograde spread of the infection throughout the host nervous system. Together with the gE/gI heterodimer, US9 is involved in the sorting and transport of viral structural components toward axon tips. In Cercopithecine herpesvirus 1 (CeHV-1), this protein is Envelope protein US9 homolog.